The primary structure comprises 542 residues: Berberine bridge enzyme-like 25 (542 aa).

A signal peptide spans 1-30 (MGNSKPLPTISCISVFALYFSFYTITLTSS). A disulfide bond links C40 and C104. N61 carries an N-linked (GlcNAc...) asparagine glycan. Positions 82–258 (TMPKPGFIFK…LSWKIKLVPV (177 aa)) constitute an FAD-binding PCMH-type domain. H119 carries the pros-8alpha-FAD histidine modification. N-linked (GlcNAc...) asparagine glycosylation is found at N308 and N436.

The protein belongs to the oxygen-dependent FAD-linked oxidoreductase family. It depends on FAD as a cofactor.

It is found in the secreted. The protein localises to the cell wall. This is Berberine bridge enzyme-like 25 from Arabidopsis thaliana (Mouse-ear cress).